The chain runs to 295 residues: Bifunctional protein FolD (295 aa).

Residues 166-168, S195, and I236 contribute to the NADP(+) site; that span reads GRS.

Belongs to the tetrahydrofolate dehydrogenase/cyclohydrolase family. In terms of assembly, homodimer.

It carries out the reaction (6R)-5,10-methylene-5,6,7,8-tetrahydrofolate + NADP(+) = (6R)-5,10-methenyltetrahydrofolate + NADPH. The enzyme catalyses (6R)-5,10-methenyltetrahydrofolate + H2O = (6R)-10-formyltetrahydrofolate + H(+). It participates in one-carbon metabolism; tetrahydrofolate interconversion. In terms of biological role, catalyzes the oxidation of 5,10-methylenetetrahydrofolate to 5,10-methenyltetrahydrofolate and then the hydrolysis of 5,10-methenyltetrahydrofolate to 10-formyltetrahydrofolate. The sequence is that of Bifunctional protein FolD from Prosthecochloris aestuarii (strain DSM 271 / SK 413).